A 285-amino-acid chain; its full sequence is Elongation factor Ts (285 aa).

The segment at 84–87 is involved in Mg(2+) ion dislocation from EF-Tu; the sequence is TDFV.

The protein belongs to the EF-Ts family.

It localises to the cytoplasm. Associates with the EF-Tu.GDP complex and induces the exchange of GDP to GTP. It remains bound to the aminoacyl-tRNA.EF-Tu.GTP complex up to the GTP hydrolysis stage on the ribosome. This chain is Elongation factor Ts, found in Bifidobacterium animalis subsp. lactis (strain AD011).